We begin with the raw amino-acid sequence, 732 residues long: Protein kinase YpkA (732 aa).

The Protein kinase domain occupies 136–408 (VAETDKFAEG…SNEARLHEFL (273 aa)). Residues 142-150 (FAEGESHIS) and K163 each bind ATP. D270 serves as the catalytic Proton acceptor.

Belongs to the protein kinase superfamily. Ser/Thr protein kinase family.

It localises to the secreted. It catalyses the reaction L-seryl-[protein] + ATP = O-phospho-L-seryl-[protein] + ADP + H(+). The catalysed reaction is L-threonyl-[protein] + ATP = O-phospho-L-threonyl-[protein] + ADP + H(+). In terms of biological role, acts as a virulence determinant. In Yersinia pestis, this protein is Protein kinase YpkA (ypkA).